The chain runs to 453 residues: 3-phosphoshikimate 1-carboxyvinyltransferase (453 aa).

Polar residues predominate over residues 1-12 (MDVNVTSSTVRG). Residues 1-21 (MDVNVTSSTVRGTTRAPPSKS) form a disordered region. 3-phosphoshikimate is bound by residues K20, S21, and R25. Residue K20 participates in phosphoenolpyruvate binding. G97 and R125 together coordinate phosphoenolpyruvate. Positions 170, 171, 172, 198, 330, and 357 each coordinate 3-phosphoshikimate. Residue Q172 participates in phosphoenolpyruvate binding. D330 acts as the Proton acceptor in catalysis. Residues R361 and R404 each coordinate phosphoenolpyruvate.

Belongs to the EPSP synthase family. Monomer.

It is found in the cytoplasm. The catalysed reaction is 3-phosphoshikimate + phosphoenolpyruvate = 5-O-(1-carboxyvinyl)-3-phosphoshikimate + phosphate. It participates in metabolic intermediate biosynthesis; chorismate biosynthesis. Its function is as follows. Catalyzes the transfer of the enolpyruvyl moiety of phosphoenolpyruvate (PEP) to the 5-hydroxyl of shikimate-3-phosphate (S3P) to produce enolpyruvyl shikimate-3-phosphate and inorganic phosphate. This is 3-phosphoshikimate 1-carboxyvinyltransferase from Halorubrum lacusprofundi (strain ATCC 49239 / DSM 5036 / JCM 8891 / ACAM 34).